A 1106-amino-acid chain; its full sequence is Protein translocase subunit SecA (1106 aa).

ATP-binding positions include Gln175, 193-197 (GEGKT), and Asp694. The interval 1021–1106 (QEAPADEQQP…KYKNCHGQNA (86 aa)) is disordered. Residues 1042–1056 (QRQDMSKYREQKQDL) are compositionally biased toward basic and acidic residues. Positions 1057 to 1067 (SDPNQQAAASQ) are enriched in polar residues. The segment covering 1068 to 1085 (DTREQQKREPIRAEKTVG) has biased composition (basic and acidic residues). Positions 1090, 1092, 1101, and 1102 each coordinate Zn(2+).

This sequence belongs to the SecA family. In terms of assembly, monomer and homodimer. Part of the essential Sec protein translocation apparatus which comprises SecA, SecYEG and auxiliary proteins SecDF. Other proteins may also be involved. Requires Zn(2+) as cofactor.

Its subcellular location is the cell inner membrane. The protein resides in the cytoplasm. The catalysed reaction is ATP + H2O + cellular proteinSide 1 = ADP + phosphate + cellular proteinSide 2.. Part of the Sec protein translocase complex. Interacts with the SecYEG preprotein conducting channel. Has a central role in coupling the hydrolysis of ATP to the transfer of proteins into and across the cell membrane, serving as an ATP-driven molecular motor driving the stepwise translocation of polypeptide chains across the membrane. This Bacteroides thetaiotaomicron (strain ATCC 29148 / DSM 2079 / JCM 5827 / CCUG 10774 / NCTC 10582 / VPI-5482 / E50) protein is Protein translocase subunit SecA.